A 136-amino-acid polypeptide reads, in one-letter code: MDQTPIRVLLAKVGLDGHDRGVKVVARALRDAGMDVIYSGLHRTPEEVVNTAIQEDVDVLGVSLLSGVQLTVFPKIFKLLDERGAGDLIVIAGGVMPDEDAAAIRKLGVREVLLQDTPPQAIIDSIRSLVAARGAR.

In terms of domain architecture, B12-binding spans 5–133 (PIRVLLAKVG…DSIRSLVAAR (129 aa)). Residue His-18 participates in adenosylcob(III)alamin binding.

This sequence belongs to the acyl-CoA mutase small subunit family. As to quaternary structure, homotetramer composed of two large substrate-binding subunits (HcmA) and two small cobalamin-binding subunits (HcmB). It depends on adenosylcob(III)alamin as a cofactor.

The enzyme catalyses 2-hydroxyisobutanoyl-CoA = (3S)-3-hydroxybutanoyl-CoA. Functionally, together with HcmA, catalyzes the isomerization of 2-hydroxyisobutyryl-CoA and 3-hydroxybutyryl-CoA. Is specific for 2-hydroxyisobutyryl-CoA and (S)-3-hydroxybutyryl-CoA, and shows only very low activity with (R)-3-hydroxybutyryl-CoA, isobutyryl-CoA and butyryl-CoA. In vitro, can isomerize pivalyl-CoA and isovaleryl-CoA, with much lower efficiency. Plays a central role in the degradation of substrates bearing a tert-butyl moiety, such as the fuel oxygenate methyl tert-butyl ether (MTBE) and its metabolites. The sequence is that of 2-hydroxyisobutanoyl-CoA mutase small subunit from Aquincola tertiaricarbonis.